We begin with the raw amino-acid sequence, 300 residues long: 4-hydroxy-tetrahydrodipicolinate synthase (300 aa).

Residue threonine 55 participates in pyruvate binding. The Proton donor/acceptor role is filled by tyrosine 143. Lysine 171 serves as the catalytic Schiff-base intermediate with substrate. Pyruvate is bound at residue isoleucine 211.

It belongs to the DapA family. In terms of assembly, homotetramer; dimer of dimers.

It is found in the cytoplasm. It catalyses the reaction L-aspartate 4-semialdehyde + pyruvate = (2S,4S)-4-hydroxy-2,3,4,5-tetrahydrodipicolinate + H2O + H(+). It functions in the pathway amino-acid biosynthesis; L-lysine biosynthesis via DAP pathway; (S)-tetrahydrodipicolinate from L-aspartate: step 3/4. In terms of biological role, catalyzes the condensation of (S)-aspartate-beta-semialdehyde [(S)-ASA] and pyruvate to 4-hydroxy-tetrahydrodipicolinate (HTPA). The polypeptide is 4-hydroxy-tetrahydrodipicolinate synthase (Mycolicibacterium paratuberculosis (strain ATCC BAA-968 / K-10) (Mycobacterium paratuberculosis)).